The sequence spans 39 residues: Photosystem II reaction center protein L (39 aa).

A helical transmembrane segment spans residues 18–38 (SLYLGLLLVAVLGILFSSYFF).

This sequence belongs to the PsbL family. In terms of assembly, PSII is composed of 1 copy each of membrane proteins PsbA, PsbB, PsbC, PsbD, PsbE, PsbF, PsbH, PsbI, PsbJ, PsbK, PsbL, PsbM, PsbT, PsbX, PsbY, PsbZ, Psb30/Ycf12, peripheral proteins PsbO, CyanoQ (PsbQ), PsbU, PsbV and a large number of cofactors. It forms dimeric complexes.

Its subcellular location is the cellular thylakoid membrane. In terms of biological role, one of the components of the core complex of photosystem II (PSII). PSII is a light-driven water:plastoquinone oxidoreductase that uses light energy to abstract electrons from H(2)O, generating O(2) and a proton gradient subsequently used for ATP formation. It consists of a core antenna complex that captures photons, and an electron transfer chain that converts photonic excitation into a charge separation. This subunit is found at the monomer-monomer interface and is required for correct PSII assembly and/or dimerization. In Microcystis aeruginosa (strain NIES-843 / IAM M-2473), this protein is Photosystem II reaction center protein L.